The sequence spans 225 residues: Uracil-DNA glycosylase (225 aa).

The Proton acceptor role is filled by Asp-68.

This sequence belongs to the uracil-DNA glycosylase (UDG) superfamily. UNG family.

The protein resides in the cytoplasm. It carries out the reaction Hydrolyzes single-stranded DNA or mismatched double-stranded DNA and polynucleotides, releasing free uracil.. Functionally, excises uracil residues from the DNA which can arise as a result of misincorporation of dUMP residues by DNA polymerase or due to deamination of cytosine. The sequence is that of Uracil-DNA glycosylase from Mycolicibacterium gilvum (strain PYR-GCK) (Mycobacterium gilvum (strain PYR-GCK)).